The primary structure comprises 554 residues: Apyrase (554 aa).

Residues Met1–Ser21 form the signal peptide. The a divalent metal cation site is built by Asp43, His45, Asp92, Asn124, His224, and His248. The AMP site is built by Arg358, Asn394, Arg399, Phe418, Phe504, and Asp510.

This sequence belongs to the 5'-nucleotidase family. The cofactor is a divalent metal cation. Salivary gland (at protein level).

It is found in the secreted. The catalysed reaction is a ribonucleoside 5'-triphosphate + 2 H2O = a ribonucleoside 5'-phosphate + 2 phosphate + 2 H(+). Its function is as follows. Facilitates hematophagy by inhibiting ADP-dependent platelet aggregation in the host. Cleaves adenosine triphosphate (ATP) and adenosine diphosphate (ADP) to adenosine monophosphate (AMP) and inorganic phosphate. Shows potential for antithrombotic activity. Can induce basophil activation. May reduce probing time by facilitating the speed of locating blood. This chain is Apyrase, found in Tabanus yao (Horsefly).